Here is a 201-residue protein sequence, read N- to C-terminus: Small ribosomal subunit protein uS4 (201 aa).

The tract at residues 1–42 (MARYTGPVTRKSRRLGTDLVGGDQSFEKRPYPPGQHGRARIK) is disordered. Residues 91–157 (SRLDNVVYRA…VPFQIARETA (67 aa)) form the S4 RNA-binding domain.

The protein belongs to the universal ribosomal protein uS4 family. As to quaternary structure, part of the 30S ribosomal subunit. Contacts protein S5. The interaction surface between S4 and S5 is involved in control of translational fidelity.

Its function is as follows. One of the primary rRNA binding proteins, it binds directly to 16S rRNA where it nucleates assembly of the body of the 30S subunit. In terms of biological role, with S5 and S12 plays an important role in translational accuracy. The polypeptide is Small ribosomal subunit protein uS4 (Mycobacterium ulcerans (strain Agy99)).